A 173-amino-acid chain; its full sequence is ATP synthase subunit d, mitochondrial (173 aa).

Residues 1–23 (MAARSAALKIDWVKVTSSLGLRG) constitute a mitochondrion transit peptide.

The protein belongs to the ATPase d subunit family. As to quaternary structure, F-type ATPases have 2 components, CF(1) - the catalytic core - and CF(0) - the membrane proton channel. In yeast, the dimeric form of ATP synthase consists of 17 polypeptides: alpha, beta, gamma, delta, epsilon, 4 (B), 5 (OSCP), 6 (A), 8, 9 (C), d, E (Tim11), f, g, h, i/j and k.

It is found in the mitochondrion inner membrane. In terms of biological role, mitochondrial membrane ATP synthase (F(1)F(0) ATP synthase or Complex V) produces ATP from ADP in the presence of a proton gradient across the membrane which is generated by electron transport complexes of the respiratory chain. F-type ATPases consist of two structural domains, F(1) - containing the extramembraneous catalytic core, and F(0) - containing the membrane proton channel, linked together by a central stalk and a peripheral stalk. During catalysis, ATP synthesis in the catalytic domain of F(1) is coupled via a rotary mechanism of the central stalk subunits to proton translocation. Part of the complex F(0) domain and the peripheric stalk, which acts as a stator to hold the catalytic alpha(3)beta(3) subcomplex and subunit a/ATP6 static relative to the rotary elements. The protein is ATP synthase subunit d, mitochondrial (atp7) of Aspergillus terreus (strain NIH 2624 / FGSC A1156).